Reading from the N-terminus, the 568-residue chain is Proline--tRNA ligase (568 aa).

Belongs to the class-II aminoacyl-tRNA synthetase family. ProS type 1 subfamily. As to quaternary structure, homodimer.

It localises to the cytoplasm. The enzyme catalyses tRNA(Pro) + L-proline + ATP = L-prolyl-tRNA(Pro) + AMP + diphosphate. In terms of biological role, catalyzes the attachment of proline to tRNA(Pro) in a two-step reaction: proline is first activated by ATP to form Pro-AMP and then transferred to the acceptor end of tRNA(Pro). As ProRS can inadvertently accommodate and process non-cognate amino acids such as alanine and cysteine, to avoid such errors it has two additional distinct editing activities against alanine. One activity is designated as 'pretransfer' editing and involves the tRNA(Pro)-independent hydrolysis of activated Ala-AMP. The other activity is designated 'posttransfer' editing and involves deacylation of mischarged Ala-tRNA(Pro). The misacylated Cys-tRNA(Pro) is not edited by ProRS. This Halorhodospira halophila (strain DSM 244 / SL1) (Ectothiorhodospira halophila (strain DSM 244 / SL1)) protein is Proline--tRNA ligase.